Consider the following 100-residue polypeptide: Small ribosomal subunit protein uS14c (100 aa).

The protein belongs to the universal ribosomal protein uS14 family. As to quaternary structure, part of the 30S ribosomal subunit.

The protein localises to the plastid. It is found in the chloroplast. In terms of biological role, binds 16S rRNA, required for the assembly of 30S particles. The sequence is that of Small ribosomal subunit protein uS14c from Ostreococcus tauri.